Reading from the N-terminus, the 429-residue chain is Trigger factor (429 aa).

The PPIase FKBP-type domain maps to 163-248 (GDFVVIDFVG…IKEIKVKETP (86 aa)).

This sequence belongs to the FKBP-type PPIase family. Tig subfamily.

The protein localises to the cytoplasm. The catalysed reaction is [protein]-peptidylproline (omega=180) = [protein]-peptidylproline (omega=0). Its function is as follows. Involved in protein export. Acts as a chaperone by maintaining the newly synthesized protein in an open conformation. Functions as a peptidyl-prolyl cis-trans isomerase. The chain is Trigger factor from Halothermothrix orenii (strain H 168 / OCM 544 / DSM 9562).